The primary structure comprises 188 residues: ESPLPKPVLDTNGKELNPNSSYRIISIGRGALGGDVYLGKSPNSDAPCPDGVFRYNSDVGPSGTPVRFIPLSGGIFEDQLLNIQFNIATVKLCVSYTIWKVGNLNAYFRTMLLETGGTIGQADSSYFKIVKLSNFGYNLLYCPITPPFLCPFCRDDNFCAKVGVVIQNGKRRLALVNENPLDVLFQEV.

N19 is a glycosylation site (N-linked (GlcNAc...) asparagine). Cystine bridges form between C48–C93, C142–C159, and C150–C153.

This sequence belongs to the protease inhibitor I3 (leguminous Kunitz-type inhibitor) family.

Its subcellular location is the vacuole. In terms of biological role, inhibitor of cathepsin D (aspartic protease) and trypsin (serine protease). May protect the plant by inhibiting proteases of invading organisms. This is Aspartic protease inhibitor 11 from Solanum tuberosum (Potato).